A 532-amino-acid chain; its full sequence is Neutral amino acid transporter A (532 aa).

An N-acetylmethionine modification is found at Met1. The disordered stretch occupies residues 1–29; that stretch reads MEKSGETNGYLDGTQAEPAAGPRTPETAM. The Cytoplasmic portion of the chain corresponds to 1–41; it reads MEKSGETNGYLDGTQAEPAAGPRTPETAMGKSQRCASFFRR. The next 3 helical transmembrane spans lie at 42-62, 88-108, and 119-139; these read HALV…GAAL, MIIL…LDAS, and AYFG…AFII. Topologically, residues 140 to 216 are extracellular; that stretch reads KPGAGAQTLQ…VTKEKIPVVT (77 aa). Residues Asn201 and Asn206 are each glycosylated (N-linked (GlcNAc...) asparagine). Helical transmembrane passes span 217 to 237, 257 to 277, 298 to 318, 328 to 348, 373 to 393, and 418 to 438; these read DVEG…GVAL, ATMV…MFLI, IFAS…LVYF, FLLG…SSAT, IGAT…AVFI, and VGAA…LEAI. Residues 495 to 532 are disordered; that stretch reads EAIPNSKSEEETSPLVTHQNPAGPVAIAPELESKESVL. A phosphoserine mark is found at Ser507, Ser527, and Ser530.

Belongs to the dicarboxylate/amino acid:cation symporter (DAACS) (TC 2.A.23) family. SLC1A4 subfamily.

It localises to the membrane. It is found in the melanosome. The catalysed reaction is L-threonine(in) + Na(+)(in) = L-threonine(out) + Na(+)(out). It carries out the reaction L-serine(in) + Na(+)(in) = L-serine(out) + Na(+)(out). The enzyme catalyses L-cysteine(in) + Na(+)(in) = L-cysteine(out) + Na(+)(out). It catalyses the reaction L-alanine(in) + Na(+)(in) = L-alanine(out) + Na(+)(out). The catalysed reaction is L-proline(in) + Na(+)(in) = L-proline(out) + Na(+)(out). It carries out the reaction 4-hydroxy-L-proline(in) + Na(+)(in) = 4-hydroxy-L-proline(out) + Na(+)(out). Functionally, sodium-dependent neutral amino-acid transporter that mediates transport of alanine, serine, cysteine, proline, hydroxyproline and threonine. This Mus musculus (Mouse) protein is Neutral amino acid transporter A (Slc1a4).